The primary structure comprises 476 residues: Acidic leucine-rich nuclear phosphoprotein 32-related protein 1 (476 aa).

3 LRR repeats span residues 51 to 72, 73 to 92, and 98 to 119; these read SLEH…PRLR, NLTR…DHLV, and SLRD…SPLA. Residues 131 to 169 enclose the LRRCT domain; that stretch reads CPVTRVKDYRSKVFGMIRTLKYLDKMDADENERPESDDD. The segment at 157–476 is disordered; sequence DADENERPES…VEDLRPFKHH (320 aa). 8 stretches are compositionally biased toward acidic residues: residues 165–194, 222–232, 252–289, 299–329, 353–371, 379–396, 415–436, and 458–467; these read ESDD…EDPG, DVDEDESDADE, GDED…EDAV, SDEE…EAEP, EGED…EERL, EGND…EDTE, DAAE…DDGG, and GDDDEDDDGV.

It belongs to the ANP32 family.

The polypeptide is Acidic leucine-rich nuclear phosphoprotein 32-related protein 1 (Oryza sativa subsp. japonica (Rice)).